We begin with the raw amino-acid sequence, 278 residues long: MKYWNLKRTNQSTFEKVGPIPRSITNTFEKFRKELDPNGESEAIEEFRLSRHQTITSVKYIFLLLISPVLVNQASKFFDFGPCIDYLWNQEQPKIFINSSQEERAFAELQRFEEKIHFEVLLNPSGNISYEIIEKRVQLKARELGEYYANESANAVKNILSDILSIAVFILLMITGQRQISIVKSFLNEIIYGLSDTAKAFLIILFTDMFVGFHSPHGWEVIIEVILRHLGLPESRDFIFLFISTFPVILDTIFKYWIFRYLNQVSPSAVATYHNMNE.

The next 4 membrane-spanning stretches (helical) occupy residues 61–81, 155–175, 203–223, and 238–258; these read IFLL…FDFG, AVKN…LMIT, IILF…EVII, and FIFL…KYWI.

It belongs to the CemA family.

It is found in the plastid. The protein localises to the chloroplast inner membrane. The catalysed reaction is K(+)(in) + H(+)(out) = K(+)(out) + H(+)(in). Functionally, contributes to K(+)/H(+) antiport activity by supporting proton efflux to control proton extrusion and homeostasis in chloroplasts in a light-dependent manner to modulate photosynthesis. Prevents excessive induction of non-photochemical quenching (NPQ) under continuous-light conditions. Indirectly promotes efficient inorganic carbon uptake into chloroplasts. The protein is Potassium/proton antiporter CemA of Porphyra purpurea (Red seaweed).